The chain runs to 498 residues: Glutamate--tRNA ligase (498 aa).

The 'HIGH' region motif lies at 12-22 (PSPTGHLHIGN). The short motif at 259–263 (KLSKR) is the 'KMSKS' region element. Lys262 is an ATP binding site.

Belongs to the class-I aminoacyl-tRNA synthetase family. Glutamate--tRNA ligase type 1 subfamily. Monomer.

It localises to the cytoplasm. It carries out the reaction tRNA(Glu) + L-glutamate + ATP = L-glutamyl-tRNA(Glu) + AMP + diphosphate. Its function is as follows. Catalyzes the attachment of glutamate to tRNA(Glu) in a two-step reaction: glutamate is first activated by ATP to form Glu-AMP and then transferred to the acceptor end of tRNA(Glu). This is Glutamate--tRNA ligase from Limosilactobacillus fermentum (strain NBRC 3956 / LMG 18251) (Lactobacillus fermentum).